Reading from the N-terminus, the 317-residue chain is Ribose-phosphate pyrophosphokinase (317 aa).

ATP-binding positions include Asp43 to Glu45 and Arg102 to Gln103. Positions 136 and 175 each coordinate Mg(2+). Lys198 is an active-site residue. Residues Arg200, Asp224, and Asp228–Thr232 contribute to the D-ribose 5-phosphate site.

The protein belongs to the ribose-phosphate pyrophosphokinase family. Class I subfamily. Homohexamer. The cofactor is Mg(2+).

It localises to the cytoplasm. The catalysed reaction is D-ribose 5-phosphate + ATP = 5-phospho-alpha-D-ribose 1-diphosphate + AMP + H(+). Its pathway is metabolic intermediate biosynthesis; 5-phospho-alpha-D-ribose 1-diphosphate biosynthesis; 5-phospho-alpha-D-ribose 1-diphosphate from D-ribose 5-phosphate (route I): step 1/1. Involved in the biosynthesis of the central metabolite phospho-alpha-D-ribosyl-1-pyrophosphate (PRPP) via the transfer of pyrophosphoryl group from ATP to 1-hydroxyl of ribose-5-phosphate (Rib-5-P). This chain is Ribose-phosphate pyrophosphokinase, found in Corynebacterium ammoniagenes (Brevibacterium ammoniagenes).